The chain runs to 614 residues: 2-succinyl-5-enolpyruvyl-6-hydroxy-3-cyclohexene-1-carboxylate synthase (614 aa).

Belongs to the TPP enzyme family. MenD subfamily. Homodimer. The cofactor is Mg(2+). It depends on Mn(2+) as a cofactor. Requires thiamine diphosphate as cofactor.

It catalyses the reaction isochorismate + 2-oxoglutarate + H(+) = 5-enolpyruvoyl-6-hydroxy-2-succinyl-cyclohex-3-ene-1-carboxylate + CO2. Its pathway is quinol/quinone metabolism; 1,4-dihydroxy-2-naphthoate biosynthesis; 1,4-dihydroxy-2-naphthoate from chorismate: step 2/7. It participates in quinol/quinone metabolism; menaquinone biosynthesis. Functionally, catalyzes the thiamine diphosphate-dependent decarboxylation of 2-oxoglutarate and the subsequent addition of the resulting succinic semialdehyde-thiamine pyrophosphate anion to isochorismate to yield 2-succinyl-5-enolpyruvyl-6-hydroxy-3-cyclohexene-1-carboxylate (SEPHCHC). This Sorangium cellulosum (strain So ce56) (Polyangium cellulosum (strain So ce56)) protein is 2-succinyl-5-enolpyruvyl-6-hydroxy-3-cyclohexene-1-carboxylate synthase.